A 239-amino-acid chain; its full sequence is tRNA (guanine-N(1)-)-methyltransferase (239 aa).

S-adenosyl-L-methionine-binding positions include glycine 108 and 127-132 (LGDFVL).

This sequence belongs to the RNA methyltransferase TrmD family. Homodimer.

The protein localises to the cytoplasm. It carries out the reaction guanosine(37) in tRNA + S-adenosyl-L-methionine = N(1)-methylguanosine(37) in tRNA + S-adenosyl-L-homocysteine + H(+). Specifically methylates guanosine-37 in various tRNAs. In Streptococcus thermophilus (strain ATCC BAA-250 / LMG 18311), this protein is tRNA (guanine-N(1)-)-methyltransferase.